We begin with the raw amino-acid sequence, 232 residues long: MDSKIIVALDYETEAEALSLVDQIDPSLCRLKVGKEMFTTLGTNFVKQLQERKFDVFLDLKFHDIPNTVARAVRSAADLGVWMVDLHASGGLRMMEEAKNILEPYGKDAPILIGVTVLTSMEDLDLLQIGINASPMEQVIRLAHLTQRAGLDGVVCSPQEVEILRKNLGSDFKLVTPGIRPVGSEFGDQRRVMTPSAAVRSGADYLVIGRPITQAENPAEVLRSINASLANI.

Residues aspartate 10, lysine 32, 59–68 (DLKFHDIPNT), threonine 119, arginine 180, glutamine 189, glycine 209, and arginine 210 each bind substrate. The active-site Proton donor is the lysine 61.

It belongs to the OMP decarboxylase family. Type 1 subfamily. As to quaternary structure, homodimer.

It carries out the reaction orotidine 5'-phosphate + H(+) = UMP + CO2. Its pathway is pyrimidine metabolism; UMP biosynthesis via de novo pathway; UMP from orotate: step 2/2. Its function is as follows. Catalyzes the decarboxylation of orotidine 5'-monophosphate (OMP) to uridine 5'-monophosphate (UMP). The polypeptide is Orotidine 5'-phosphate decarboxylase (Actinobacillus succinogenes (strain ATCC 55618 / DSM 22257 / CCUG 43843 / 130Z)).